Reading from the N-terminus, the 202-residue chain is Large ribosomal subunit protein uL13 (202 aa).

Belongs to the universal ribosomal protein uL13 family. As to quaternary structure, component of the large ribosomal subunit (LSU). Mature N.crassa ribosomes consist of a small (40S) and a large (60S) subunit. The 40S small subunit contains 1 molecule of ribosomal RNA (18S rRNA) and at least 32 different proteins. The large 60S subunit contains 3 rRNA molecules (26S, 5.8S and 5S rRNA) and at least 42 different proteins.

The protein localises to the cytoplasm. In terms of biological role, component of the ribosome, a large ribonucleoprotein complex responsible for the synthesis of proteins in the cell. The small ribosomal subunit (SSU) binds messenger RNAs (mRNAs) and translates the encoded message by selecting cognate aminoacyl-transfer RNA (tRNA) molecules. The large subunit (LSU) contains the ribosomal catalytic site termed the peptidyl transferase center (PTC), which catalyzes the formation of peptide bonds, thereby polymerizing the amino acids delivered by tRNAs into a polypeptide chain. The nascent polypeptides leave the ribosome through a tunnel in the LSU and interact with protein factors that function in enzymatic processing, targeting, and the membrane insertion of nascent chains at the exit of the ribosomal tunnel. The sequence is that of Large ribosomal subunit protein uL13 (crp-46) from Neurospora crassa (strain ATCC 24698 / 74-OR23-1A / CBS 708.71 / DSM 1257 / FGSC 987).